The primary structure comprises 376 residues: Lipoyl synthase, mitochondrial (376 aa).

[4Fe-4S] cluster contacts are provided by cysteine 103, cysteine 108, cysteine 114, cysteine 134, cysteine 138, cysteine 141, and serine 349. The Radical SAM core domain maps to 119-338 (EHGTQTATIM…EDRGNQLGFL (220 aa)).

The protein belongs to the radical SAM superfamily. Lipoyl synthase family. [4Fe-4S] cluster serves as cofactor.

The protein localises to the mitochondrion. It catalyses the reaction [[Fe-S] cluster scaffold protein carrying a second [4Fe-4S](2+) cluster] + N(6)-octanoyl-L-lysyl-[protein] + 2 oxidized [2Fe-2S]-[ferredoxin] + 2 S-adenosyl-L-methionine + 4 H(+) = [[Fe-S] cluster scaffold protein] + N(6)-[(R)-dihydrolipoyl]-L-lysyl-[protein] + 4 Fe(3+) + 2 hydrogen sulfide + 2 5'-deoxyadenosine + 2 L-methionine + 2 reduced [2Fe-2S]-[ferredoxin]. It functions in the pathway protein modification; protein lipoylation via endogenous pathway; protein N(6)-(lipoyl)lysine from octanoyl-[acyl-carrier-protein]: step 2/2. Catalyzes the radical-mediated insertion of two sulfur atoms into the C-6 and C-8 positions of the octanoyl moiety bound to the lipoyl domains of lipoate-dependent enzymes, thereby converting the octanoylated domains into lipoylated derivatives. The chain is Lipoyl synthase, mitochondrial from Drosophila ananassae (Fruit fly).